The chain runs to 425 residues: E3 ubiquitin-protein ligase CBLL2 (425 aa).

An RING-type zinc finger spans residues 57-97; the sequence is CDKCDLPIKIYGRIIPCKHAFCYHCANLYDKVGYKVCPRCR. The HYB domain stretch occupies residues 96 to 154; that stretch reads CRYPVLRIEAHKRGSVFMCSIVQQCKRTYLSQKSLQAHIKRRHKRARKQVTSASLEKVR. Residues 112–138 form a C2H2-type zinc finger; that stretch reads FMCSIVQQCKRTYLSQKSLQAHIKRRH. Disordered regions lie at residues 241–297 and 382–425; these read DHIQ…HQMP and TDAM…HRRY. Residues 398–408 show a composition bias toward pro residues; sequence PCPPTRSPPPS. The segment covering 412-425 has biased composition (basic residues); that stretch reads GRSHHSHQRRHRRY.

In terms of assembly, homodimer. In terms of tissue distribution, exclusively expressed in testis and sperm, including spermatocytes, round and elongated spermatids, and Leydig cells.

The protein resides in the cytoplasm. The enzyme catalyses S-ubiquitinyl-[E2 ubiquitin-conjugating enzyme]-L-cysteine + [acceptor protein]-L-lysine = [E2 ubiquitin-conjugating enzyme]-L-cysteine + N(6)-ubiquitinyl-[acceptor protein]-L-lysine.. It functions in the pathway protein modification; protein ubiquitination. E3 ubiquitin ligase catalyzing the covalent attachment of ubiquitin moieties onto substrate proteins. May operate on tyrosine-phosphorylated SRC substrates. The protein is E3 ubiquitin-protein ligase CBLL2 of Homo sapiens (Human).